A 465-amino-acid chain; its full sequence is UDP-N-acetylmuramoylalanine--D-glutamate ligase (465 aa).

Glycine 112–threonine 118 contributes to the ATP binding site.

Belongs to the MurCDEF family.

The protein resides in the cytoplasm. The enzyme catalyses UDP-N-acetyl-alpha-D-muramoyl-L-alanine + D-glutamate + ATP = UDP-N-acetyl-alpha-D-muramoyl-L-alanyl-D-glutamate + ADP + phosphate + H(+). It functions in the pathway cell wall biogenesis; peptidoglycan biosynthesis. Its function is as follows. Cell wall formation. Catalyzes the addition of glutamate to the nucleotide precursor UDP-N-acetylmuramoyl-L-alanine (UMA). The protein is UDP-N-acetylmuramoylalanine--D-glutamate ligase of Chlorobium limicola (strain DSM 245 / NBRC 103803 / 6330).